A 108-amino-acid polypeptide reads, in one-letter code: Protein YcgL (108 aa).

One can recognise a YcgL domain in the interval 12–96; sequence MFCVIYRSSK…PPEDLLKQHL (85 aa).

This Escherichia coli O127:H6 (strain E2348/69 / EPEC) protein is Protein YcgL.